A 30-amino-acid chain; its full sequence is Thaumatin-like protein (30 aa).

Belongs to the thaumatin family.

It is found in the secreted. Has antifungal activity against C.comatus, F.oxysporum and P.ostreatus. The polypeptide is Thaumatin-like protein (Phaseolus vulgaris (Kidney bean)).